A 313-amino-acid polypeptide reads, in one-letter code: uncharacterized protein (313 aa).

Helical transmembrane passes span 31-53 (AWGI…GWLF), 62-84 (LFLF…WNPY), 104-126 (VFFW…IYTS), 147-161 (FALL…NQSV), 166-185 (SMFW…SFLL), 198-220 (RVLK…ALRF), 225-244 (SFSG…YLII), 264-282 (FFAA…TSSF), and 286-308 (PAAM…SILI).

It localises to the cell membrane. This is an uncharacterized protein from Archaeoglobus fulgidus (strain ATCC 49558 / DSM 4304 / JCM 9628 / NBRC 100126 / VC-16).